A 162-amino-acid chain; its full sequence is Eukaryotic translation initiation factor 5 (162 aa).

The segment at 59 to 162 (PPNLNPAVQG…EKDRMDIFYE (104 aa)) is disordered. Polar residues predominate over residues 85–109 (GDTNGDTSQVDDQNESLEASVNENS). The segment covering 148–162 (DLEKREKDRMDIFYE) has biased composition (basic and acidic residues).

It belongs to the eIF-2-beta/eIF-5 family.

Functionally, catalyzes the hydrolysis of GTP bound to the 40S ribosomal initiation complex (40S.mRNA.Met-tRNA[F].eIF-2.GTP) with the subsequent joining of a 60S ribosomal subunit resulting in the release of eIF-2 and the guanine nucleotide. The subsequent joining of a 60S ribosomal subunit results in the formation of a functional 80S initiation complex (80S.mRNA.Met-tRNA[F]). The protein is Eukaryotic translation initiation factor 5 of Tribolium castaneum (Red flour beetle).